The following is a 502-amino-acid chain: Carbon catabolite-derepressing protein kinase (502 aa).

The Protein kinase domain maps to 14–269 (YYLGKILGVG…IGEIRKHSWF (256 aa)). ATP contacts are provided by residues 20 to 28 (LGVGTFAKV) and Lys43. The Proton acceptor role is filled by Asp140. Residue Thr173 is modified to Phosphothreonine; by autocatalysis. The UBA domain occupies 290–330 (MIDEDTLRDVVKLGYDKDHVCESLCNRLQNEETVAYYLLLD). Residues 453 to 501 (NSRLPAVIKFEIQLYKTKDDKYLLDMQRVTGPQLLFLEFCAAFLTNLRV) form the KA1 domain.

Belongs to the protein kinase superfamily. CAMK Ser/Thr protein kinase family. SNF1 subfamily.

The enzyme catalyses L-seryl-[protein] + ATP = O-phospho-L-seryl-[protein] + ADP + H(+). The catalysed reaction is L-threonyl-[protein] + ATP = O-phospho-L-threonyl-[protein] + ADP + H(+). Functionally, essential for release from glucose repression. The sequence is that of Carbon catabolite-derepressing protein kinase (RKIN1) from Secale cereale (Rye).